Consider the following 973-residue polypeptide: Translation initiation factor IF-2 (973 aa).

Residues 52–388 (PDQEEVKPAA…QAQKPAQPLE (337 aa)) are disordered. Composition is skewed to basic and acidic residues over residues 83-120 (ESRKKDAAMLDSQKPDRDRVQKNGRERAGKATRADHYK), 128-148 (VPSRPPDRRFQERPKQSDKAR), 157-172 (QGARLKTADFVQERTR), 186-202 (VQQERVQDRQQKERPPF), 210-246 (PQHEHKPQDSVKERPHPERASREADNAKRAERLDKGA), 272-288 (RAGERGARPGGLHETKP), 314-333 (LLDDRRRQTEEKVKVTEKQK), and 343-360 (KSREKRNAMAELAEERLR). Residues 374–386 (AKPQEQAQKPAQP) are compositionally biased toward low complexity. Residues 472-641 (DRPCVVTVMG…LLVAEMSELK (170 aa)) enclose the tr-type G domain. Positions 481-488 (GHVDHGKT) are G1. 481–488 (GHVDHGKT) is a binding site for GTP. The G2 stretch occupies residues 506 to 510 (GITQH). Residues 527–530 (DTPG) are G3. GTP contacts are provided by residues 527 to 531 (DTPGH) and 581 to 584 (NKID). Residues 581–584 (NKID) form a G4 region. The tract at residues 617–619 (SAL) is G5.

The protein belongs to the TRAFAC class translation factor GTPase superfamily. Classic translation factor GTPase family. IF-2 subfamily.

It is found in the cytoplasm. Functionally, one of the essential components for the initiation of protein synthesis. Protects formylmethionyl-tRNA from spontaneous hydrolysis and promotes its binding to the 30S ribosomal subunits. Also involved in the hydrolysis of GTP during the formation of the 70S ribosomal complex. This is Translation initiation factor IF-2 from Pelotomaculum thermopropionicum (strain DSM 13744 / JCM 10971 / SI).